The chain runs to 259 residues: Deoxyribose-phosphate aldolase (259 aa).

D102 serves as the catalytic Proton donor/acceptor. K167 acts as the Schiff-base intermediate with acetaldehyde in catalysis. The active-site Proton donor/acceptor is K201.

Belongs to the DeoC/FbaB aldolase family. DeoC type 2 subfamily.

The protein localises to the cytoplasm. The catalysed reaction is 2-deoxy-D-ribose 5-phosphate = D-glyceraldehyde 3-phosphate + acetaldehyde. The protein operates within carbohydrate degradation; 2-deoxy-D-ribose 1-phosphate degradation; D-glyceraldehyde 3-phosphate and acetaldehyde from 2-deoxy-alpha-D-ribose 1-phosphate: step 2/2. In terms of biological role, catalyzes a reversible aldol reaction between acetaldehyde and D-glyceraldehyde 3-phosphate to generate 2-deoxy-D-ribose 5-phosphate. The protein is Deoxyribose-phosphate aldolase of Klebsiella pneumoniae (strain 342).